The following is a 576-amino-acid chain: Pentatricopeptide repeat-containing protein At1g79080, chloroplastic (576 aa).

A chloroplast-targeting transit peptide spans methionine 1–serine 37. PPR repeat units follow at residues asparagine 105–proline 139, aspartate 140–serine 174, asparagine 175–proline 209, asparagine 210–proline 244, asparagine 245–alanine 279, asparagine 280–proline 314, serine 315–phenylalanine 349, threonine 352–proline 386, asparagine 387–lysine 417, threonine 422–proline 456, aspartate 457–serine 487, threonine 493–proline 527, and asparagine 528–glycine 562.

It belongs to the PPR family. P subfamily.

The protein localises to the plastid. It is found in the chloroplast. The polypeptide is Pentatricopeptide repeat-containing protein At1g79080, chloroplastic (Arabidopsis thaliana (Mouse-ear cress)).